The primary structure comprises 213 residues: Pyridoxine/pyridoxamine 5'-phosphate oxidase (213 aa).

Substrate-binding positions include 9 to 12 and Lys67; that span reads RLEY. FMN contacts are provided by residues 62 to 67, 77 to 78, Arg83, Lys84, and Gln106; these read RIVLLK and YT. The substrate site is built by Tyr124, Arg128, and Ser132. Residues 141 to 142 and Trp185 each bind FMN; that span reads QS. 191-193 is a binding site for substrate; it reads RLH. Arg195 serves as a coordination point for FMN.

It belongs to the pyridoxamine 5'-phosphate oxidase family. In terms of assembly, homodimer. Requires FMN as cofactor.

It catalyses the reaction pyridoxamine 5'-phosphate + O2 + H2O = pyridoxal 5'-phosphate + H2O2 + NH4(+). The enzyme catalyses pyridoxine 5'-phosphate + O2 = pyridoxal 5'-phosphate + H2O2. The protein operates within cofactor metabolism; pyridoxal 5'-phosphate salvage; pyridoxal 5'-phosphate from pyridoxamine 5'-phosphate: step 1/1. Its pathway is cofactor metabolism; pyridoxal 5'-phosphate salvage; pyridoxal 5'-phosphate from pyridoxine 5'-phosphate: step 1/1. In terms of biological role, catalyzes the oxidation of either pyridoxine 5'-phosphate (PNP) or pyridoxamine 5'-phosphate (PMP) into pyridoxal 5'-phosphate (PLP). This Chromobacterium violaceum (strain ATCC 12472 / DSM 30191 / JCM 1249 / CCUG 213 / NBRC 12614 / NCIMB 9131 / NCTC 9757 / MK) protein is Pyridoxine/pyridoxamine 5'-phosphate oxidase.